We begin with the raw amino-acid sequence, 185 residues long: Ribosome-recycling factor (185 aa).

It belongs to the RRF family.

It is found in the cytoplasm. Its function is as follows. Responsible for the release of ribosomes from messenger RNA at the termination of protein biosynthesis. May increase the efficiency of translation by recycling ribosomes from one round of translation to another. This is Ribosome-recycling factor from Halothermothrix orenii (strain H 168 / OCM 544 / DSM 9562).